The chain runs to 48 residues: MSGGGVFTDILAAAGRIFEVMVEGHWETVGMLFDSLGKGTMRINRNAY.

Residue His-25 coordinates a bacteriochlorophyll c.

Belongs to the BChl C/E-binding protein family.

It is found in the chlorosome. The protein localises to the chlorosome envelope. In terms of biological role, component of the photosynthetic apparatus. The light harvesting B740 complex binds bacteriochlorophyll c. This chain is Bacteriochlorophyll c-binding protein (csmA), found in Chlorobaculum thiosulfatiphilum (Chlorobium limicola f.sp. thiosulfatophilum).